Reading from the N-terminus, the 398-residue chain is Cytohesin-1 (398 aa).

Residue Met1 is modified to N-acetylmethionine. The interval 1 to 60 (MEDDDSYVPSDLTAEERQELENIRRRKQELLADIQRLKEEIAEVANEIESLGSTEERKNM) is necessary for localization at adherens junction. Residues 10–67 (SDLTAEERQELENIRRRKQELLADIQRLKEEIAEVANEIESLGSTEERKNMQRNKQVA) are a coiled coil. The SEC7 domain occupies 73-202 (FNMDPKKGIQ…IIMLNTSLHN (130 aa)). The 118-residue stretch at 260–377 (NPDREGWLLK…WIKCIKAAIS (118 aa)) folds into the PH domain. Residues 269-277 (KLGGGRVKT), Arg281, Tyr292, Arg302, and Asn351 each bind a 1,2-diacyl-sn-glycero-3-phospho-(1D-myo-inositol-3,4,5-trisphosphate). The segment at 388–396 (RKKKVSSTK) is C-terminal autoinhibitory region.

In terms of assembly, interacts with TRIM23 and CYTIP. Interacts (via coiled-coil domain) with FRMD4A (via coiled-coil domain). Interacts with FRMD4B. Found in a complex with PARD3, CYTH1 and FRMD4A. Interacts (via N-terminal domain) with INAVA (via N-terminal domain). In terms of processing, ubiquitinated by SCF(FBXW11) E3 ubiquitin-protein ligase complex. Ubiquitination induces proteasomal degradation. As to expression, expressed in colon and small intestine (at protein level).

The protein resides in the cell membrane. It is found in the cytoplasm. It localises to the cytosol. The protein localises to the cell junction. Its subcellular location is the tight junction. The protein resides in the adherens junction. In terms of biological role, promotes guanine-nucleotide exchange on ARF1, ARF5 and ARF6. Promotes the activation of ARF factors through replacement of GDP with GTP. Plays an important role in membrane trafficking, during junctional remodeling and epithelial polarization, through regulation of ARF6 activity. This Mus musculus (Mouse) protein is Cytohesin-1 (Cyth1).